Consider the following 279-residue polypeptide: DegV domain-containing protein CA_C0701 (279 aa).

The 274-residue stretch at 4–277 (IKIVTDSTCD…TKACGVFFIE (274 aa)) folds into the DegV domain. Positions 62 and 94 each coordinate hexadecanoate.

Functionally, may bind long-chain fatty acids, such as palmitate, and may play a role in lipid transport or fatty acid metabolism. This Clostridium acetobutylicum (strain ATCC 824 / DSM 792 / JCM 1419 / IAM 19013 / LMG 5710 / NBRC 13948 / NRRL B-527 / VKM B-1787 / 2291 / W) protein is DegV domain-containing protein CA_C0701.